Here is a 215-residue protein sequence, read N- to C-terminus: Guanylate kinase (215 aa).

Positions 11–189 (GNVFMVVAPS…ALTELVQIIS (179 aa)) constitute a Guanylate kinase-like domain. 18–25 (APSGAGKS) is an ATP binding site.

The protein belongs to the guanylate kinase family.

It localises to the cytoplasm. The enzyme catalyses GMP + ATP = GDP + ADP. Its function is as follows. Essential for recycling GMP and indirectly, cGMP. This chain is Guanylate kinase, found in Bordetella bronchiseptica (strain ATCC BAA-588 / NCTC 13252 / RB50) (Alcaligenes bronchisepticus).